Reading from the N-terminus, the 708-residue chain is Matrix metalloproteinase-9 (708 aa).

A signal peptide spans 1–19 (MSPWQPLLLVLLALGYSFA). Positions 20–107 (APHQRQPTYV…PRCGVPDVGK (88 aa)) are cleaved as a propeptide — activation peptide. Asparagine 39 is a glycosylation site (N-linked (GlcNAc...) asparagine). The Cysteine switch motif lies at 98–105 (PRCGVPDV). Cysteine 100 serves as a coordination point for Zn(2+). Residue asparagine 121 is glycosylated (N-linked (GlcNAc...) asparagine). Ca(2+) is bound by residues aspartate 132 and aspartate 166. Residues histidine 176 and aspartate 178 each coordinate Zn(2+). Positions 183, 184, 186, and 188 each coordinate Ca(2+). Histidine 191 is a binding site for Zn(2+). 3 residues coordinate Ca(2+): glycine 198, glutamine 200, and aspartate 202. Residue histidine 204 coordinates Zn(2+). Residues aspartate 206, aspartate 207, and glutamate 209 each contribute to the Ca(2+) site. Fibronectin type-II domains lie at 226–274 (ANGA…FCPS), 284–332 (GDGK…FCPT), and 343–391 (SAGE…FCPD). Disulfide bonds link cysteine 231–cysteine 257, cysteine 245–cysteine 272, cysteine 289–cysteine 315, cysteine 303–cysteine 330, cysteine 348–cysteine 374, and cysteine 362–cysteine 389. Histidine 402 contacts Zn(2+). The active site involves glutamate 403. Zn(2+) is bound by residues histidine 406 and histidine 412. Residues 441–520 (HHLYGRGSKP…SSTPDDNPCN (80 aa)) are disordered. The segment covering 480-490 (PTGGPTVAPTG) has biased composition (low complexity). The span at 491 to 502 (APSPGPTGPPTA) shows a compositional bias: pro residues. Residues cysteine 519 and cysteine 707 are joined by a disulfide bond. 4 Hemopexin repeats span residues 521-566 (VDVF…WPAF), 567-611 (PSKL…GLGS), 613-660 (VTLV…FSGV), and 661-707 (PWNS…LLQC).

It belongs to the peptidase M10A family. In terms of assembly, exists as monomer or homodimer; disulfide-linked. Also exists as heterodimer with LCN2. Macrophages and transformed cell lines produce only the monomeric form. Interacts with ECM1. Zn(2+) is required as a cofactor. Requires Ca(2+) as cofactor. N- and O-glycosylated.

It localises to the secreted. Its subcellular location is the extracellular space. The protein localises to the extracellular matrix. It carries out the reaction Cleavage of gelatin types I and V and collagen types IV and V.. Matrix metalloproteinase that plays an essential role in local proteolysis of the extracellular matrix and in leukocyte migration. Could play a role in bone osteoclastic resorption. Cleaves KiSS1 at a Gly-|-Leu bond. Cleaves NINJ1 to generate the Secreted ninjurin-1 form. Cleaves type IV and type V collagen into large C-terminal three quarter fragments and shorter N-terminal one quarter fragments. Degrades fibronectin but not laminin or Pz-peptide. In Rattus norvegicus (Rat), this protein is Matrix metalloproteinase-9 (Mmp9).